The primary structure comprises 211 residues: Thiamine-phosphate synthase (211 aa).

4-amino-2-methyl-5-(diphosphooxymethyl)pyrimidine is bound by residues 37–41 (QYRDK) and Asn69. Residues Asp70 and Asp89 each coordinate Mg(2+). Ser108 provides a ligand contact to 4-amino-2-methyl-5-(diphosphooxymethyl)pyrimidine. 135 to 137 (SPT) is a 2-[(2R,5Z)-2-carboxy-4-methylthiazol-5(2H)-ylidene]ethyl phosphate binding site. 4-amino-2-methyl-5-(diphosphooxymethyl)pyrimidine is bound at residue Lys138. 2-[(2R,5Z)-2-carboxy-4-methylthiazol-5(2H)-ylidene]ethyl phosphate-binding positions include Gly165 and 185-186 (LS).

Belongs to the thiamine-phosphate synthase family. Mg(2+) is required as a cofactor.

The catalysed reaction is 2-[(2R,5Z)-2-carboxy-4-methylthiazol-5(2H)-ylidene]ethyl phosphate + 4-amino-2-methyl-5-(diphosphooxymethyl)pyrimidine + 2 H(+) = thiamine phosphate + CO2 + diphosphate. The enzyme catalyses 2-(2-carboxy-4-methylthiazol-5-yl)ethyl phosphate + 4-amino-2-methyl-5-(diphosphooxymethyl)pyrimidine + 2 H(+) = thiamine phosphate + CO2 + diphosphate. It catalyses the reaction 4-methyl-5-(2-phosphooxyethyl)-thiazole + 4-amino-2-methyl-5-(diphosphooxymethyl)pyrimidine + H(+) = thiamine phosphate + diphosphate. It functions in the pathway cofactor biosynthesis; thiamine diphosphate biosynthesis; thiamine phosphate from 4-amino-2-methyl-5-diphosphomethylpyrimidine and 4-methyl-5-(2-phosphoethyl)-thiazole: step 1/1. Its function is as follows. Condenses 4-methyl-5-(beta-hydroxyethyl)thiazole monophosphate (THZ-P) and 2-methyl-4-amino-5-hydroxymethyl pyrimidine pyrophosphate (HMP-PP) to form thiamine monophosphate (TMP). This Thiobacillus denitrificans (strain ATCC 25259 / T1) protein is Thiamine-phosphate synthase.